A 107-amino-acid chain; its full sequence is Large ribosomal subunit protein uL24 (107 aa).

Belongs to the universal ribosomal protein uL24 family. Part of the 50S ribosomal subunit.

One of two assembly initiator proteins, it binds directly to the 5'-end of the 23S rRNA, where it nucleates assembly of the 50S subunit. In terms of biological role, one of the proteins that surrounds the polypeptide exit tunnel on the outside of the subunit. The sequence is that of Large ribosomal subunit protein uL24 from Streptomyces avermitilis (strain ATCC 31267 / DSM 46492 / JCM 5070 / NBRC 14893 / NCIMB 12804 / NRRL 8165 / MA-4680).